The chain runs to 77 residues: Cell division topological specificity factor (77 aa).

This sequence belongs to the MinE family.

Its function is as follows. Prevents the cell division inhibition by proteins MinC and MinD at internal division sites while permitting inhibition at polar sites. This ensures cell division at the proper site by restricting the formation of a division septum at the midpoint of the long axis of the cell. This chain is Cell division topological specificity factor, found in Helicobacter acinonychis (strain Sheeba).